The chain runs to 385 residues: Rubredoxin-NAD(+) reductase (385 aa).

Residues 8-11 (AGTA), 32-33 (SR), I79, E156, D275, and I293 each bind FAD.

Belongs to the FAD-dependent oxidoreductase family. As to quaternary structure, homodimer. FAD is required as a cofactor.

It localises to the cytoplasm. The catalysed reaction is 2 reduced [rubredoxin] + NAD(+) + H(+) = 2 oxidized [rubredoxin] + NADH. Its pathway is hydrocarbon metabolism; alkane degradation. In terms of biological role, involved in the hydrocarbon hydroxylating system, which transfers electrons from NADH to rubredoxin reductase and then through rubredoxin to alkane 1 monooxygenase. In Pseudomonas putida (Arthrobacter siderocapsulatus), this protein is Rubredoxin-NAD(+) reductase (alkT).